Consider the following 188-residue polypeptide: Apolipoprotein M (188 aa).

Positions 1 to 22 form a signal peptide, not cleaved; the sequence is MFHQIWAALLYLYGILLNSIYQ. Intrachain disulfides connect Cys23–Cys167, Cys95–Cys183, and Cys128–Cys157. Tetradecanoate-binding residues include Glu136 and Arg143.

The protein belongs to the calycin superfamily. Lipocalin family. Highly divergent. As to quaternary structure, interacts with LRP2; LRP2 mediates APOM renal uptake and subsequent lysosomal degradation.

The protein localises to the secreted. Functionally, probably involved in lipid transport. Can bind sphingosine-1-phosphate, myristic acid, palmitic acid and stearic acid, retinol, all-trans-retinoic acid and 9-cis-retinoic acid. This Sus scrofa (Pig) protein is Apolipoprotein M (APOM).